A 277-amino-acid chain; its full sequence is Large ribosomal subunit protein uL2 (277 aa).

Residues 199–277 form a disordered region; that stretch reads DHMNTSIGKA…ILLSRHKRKK (79 aa). Over residues 209–220 the composition is skewed to basic residues; it reads GRNRWLGRKPHN.

This sequence belongs to the universal ribosomal protein uL2 family. As to quaternary structure, part of the 50S ribosomal subunit. Forms a bridge to the 30S subunit in the 70S ribosome.

In terms of biological role, one of the primary rRNA binding proteins. Required for association of the 30S and 50S subunits to form the 70S ribosome, for tRNA binding and peptide bond formation. It has been suggested to have peptidyltransferase activity; this is somewhat controversial. Makes several contacts with the 16S rRNA in the 70S ribosome. The chain is Large ribosomal subunit protein uL2 from Bradyrhizobium diazoefficiens (strain JCM 10833 / BCRC 13528 / IAM 13628 / NBRC 14792 / USDA 110).